Consider the following 254-residue polypeptide: MIMSSKEVEIIWHQIISEVEILMDQEPELAGFYHAYILQHDSFDMALSYILSNQLSNKVMSTVFVRDIINKVYIACRKIVAYAIQDIKALFNHGLVHCYSFSLLHSKGFHALQAYRISNFLWCEEKKSLALYFQNRISCLFSVDIHPASMIGSGIVLDNAIGITIGQTSAIKDSVSVLSQSLALLGSAFKISSVQCPKINEGVIIGANVAILGNVVIGEKTKIQACTVVLQSVPPNSIVTSVLAKIVSFKNINE.

The protein belongs to the transferase hexapeptide repeat family.

The protein localises to the cytoplasm. It carries out the reaction L-serine + acetyl-CoA = O-acetyl-L-serine + CoA. The protein operates within amino-acid biosynthesis; L-cysteine biosynthesis; L-cysteine from L-serine: step 1/2. The sequence is that of Serine acetyltransferase (cysE) from Buchnera aphidicola subsp. Baizongia pistaciae (strain Bp).